Here is an 831-residue protein sequence, read N- to C-terminus: Prickle-like protein 1 (831 aa).

Residues 14–122 (FGCQRSSTSD…TIKLLSRAVM (109 aa)) form the PET domain. LIM zinc-binding domains lie at 124 to 189 (AVCE…LLKP), 189 to 249 (PRCS…LYAE), and 249 to 313 (EYCE…EDVH). A disordered region spans residues 313 to 342 (HASDSSDSAFQSARSRDSRRSVRMGKSSRS). A phosphoserine mark is found at Ser-315, Ser-591, and Ser-594. Disordered stretches follow at residues 663-688 (FEER…NALN) and 763-831 (CSSS…CIIS). Positions 669 to 680 (RSHHHRRRRSRK) are enriched in basic residues. Ser-683 bears the Phosphoserine mark. Residues 815 to 831 (TKSKKKKGHKGKNCIIS) are compositionally biased toward basic residues. Cys-828 bears the Cysteine methyl ester mark. Cys-828 is lipidated: S-farnesyl cysteine. A propeptide spans 829 to 831 (IIS) (removed in mature form).

It belongs to the prickle / espinas / testin family. Interacts with REST. In terms of tissue distribution, expressed at highest levels in placenta and at lower levels in lung, liver, kidney and pancreas. Expressed in thalamus, hippocampus, cerebral cortex, and cerebellum (in neurons rather than glia).

It localises to the nucleus membrane. The protein localises to the cytoplasm. The protein resides in the cytosol. In terms of biological role, involved in the planar cell polarity pathway that controls convergent extension during gastrulation and neural tube closure. Convergent extension is a complex morphogenetic process during which cells elongate, move mediolaterally, and intercalate between neighboring cells, leading to convergence toward the mediolateral axis and extension along the anteroposterior axis. Necessary for nuclear localization of REST. May serve as nuclear receptor. In Homo sapiens (Human), this protein is Prickle-like protein 1 (PRICKLE1).